The sequence spans 300 residues: Taste receptor type 2 member 105 (300 aa).

Topologically, residues 1–7 are extracellular; sequence MLSAAEG. Residues 8–28 traverse the membrane as a helical segment; the sequence is ILLSIATVEAGLGVLGNTFIA. Residues 29 to 43 lie on the Cytoplasmic side of the membrane; it reads LVNCMDWAKNNKLSM. A helical transmembrane segment spans residues 44–64; the sequence is TGFLLIGLATSRIFIVWLLTL. Residues 65–87 are Extracellular-facing; that stretch reads DAYAKLFYPSKYFSSSLIEIISY. The chain crosses the membrane as a helical span at residues 88–108; sequence IWMTVNHLTVWFATSLSIFYF. Residues 109-128 lie on the Cytoplasmic side of the membrane; sequence LKIANFSDCVFLWLKRRTDK. The chain crosses the membrane as a helical span at residues 129 to 149; it reads AFVFLLGCLLTSWVISFSFVV. Residues 150–181 are Extracellular-facing; it reads KVMKDGKVNHRNRTSEMYWEKRQFTINYVFLN. N-linked (GlcNAc...) asparagine glycosylation occurs at Asn161. The helical transmembrane segment at 182 to 202 threads the bilayer; sequence IGVISLFMMTLTACFLLIMSL. Residues 203-233 lie on the Cytoplasmic side of the membrane; sequence WRHSRQMQSGVSGFRDLNTEAHVKAIKFLIS. Residues 234–254 traverse the membrane as a helical segment; it reads FIILFVLYFIGVSIEIICIFI. The Extracellular portion of the chain corresponds to 255-259; that stretch reads PENKL. Residues 260 to 280 traverse the membrane as a helical segment; it reads LFIFGFTTASIYPCCHSFILI. At 281–300 the chain is on the cytoplasmic side; the sequence is LSNSQLKQAFVKVLQGLKFF.

This sequence belongs to the G-protein coupled receptor T2R family. As to expression, expressed in subsets of taste receptor cells of the tongue and palate epithelium and exclusively in gustducin-positive cells. Expressed in gastric and duodenal tissues.

The protein localises to the membrane. In terms of biological role, gustducin-coupled cycloheximide receptor implicated in the perception of bitter compounds in the oral cavity and the gastrointestinal tract. Signals through PLCB2 and the calcium-regulated cation channel TRPM5. The sequence is that of Taste receptor type 2 member 105 (Tas2r105) from Mus musculus (Mouse).